Reading from the N-terminus, the 495-residue chain is Cysteine--tRNA ligase (495 aa).

Residue C35 coordinates Zn(2+). Positions 37–47 (PTVYSNVHLGN) match the 'HIGH' region motif. The Zn(2+) site is built by C230, H255, and E259. The 'KMSKS' region signature appears at 287–291 (KMSKS). An ATP-binding site is contributed by K290.

This sequence belongs to the class-I aminoacyl-tRNA synthetase family. As to quaternary structure, monomer. Zn(2+) is required as a cofactor.

It localises to the cytoplasm. The catalysed reaction is tRNA(Cys) + L-cysteine + ATP = L-cysteinyl-tRNA(Cys) + AMP + diphosphate. This chain is Cysteine--tRNA ligase, found in Flavobacterium psychrophilum (strain ATCC 49511 / DSM 21280 / CIP 103535 / JIP02/86).